Consider the following 153-residue polypeptide: Large ribosomal subunit protein bL9 (153 aa).

The protein belongs to the bacterial ribosomal protein bL9 family.

In terms of biological role, binds to the 23S rRNA. The sequence is that of Large ribosomal subunit protein bL9 from Blochmanniella pennsylvanica (strain BPEN).